The sequence spans 79 residues: Small ribosomal subunit protein bS18 (79 aa).

This sequence belongs to the bacterial ribosomal protein bS18 family. As to quaternary structure, part of the 30S ribosomal subunit. Forms a tight heterodimer with protein bS6.

Its function is as follows. Binds as a heterodimer with protein bS6 to the central domain of the 16S rRNA, where it helps stabilize the platform of the 30S subunit. The protein is Small ribosomal subunit protein bS18 of Salinispora arenicola (strain CNS-205).